A 209-amino-acid polypeptide reads, in one-letter code: NAD(P)H dehydrogenase (quinone) (209 aa).

In terms of domain architecture, Flavodoxin-like spans 4–199 (VNIIFHSVHA…EMARYQGRHV (196 aa)). FMN contacts are provided by residues 10 to 15 (SVHAHI) and 87 to 89 (TRY). Trp-107 contributes to the substrate binding site. Residues 122-128 (SSGTQHG) and His-143 contribute to the FMN site.

The protein belongs to the WrbA family. Requires FMN as cofactor.

It catalyses the reaction a quinone + NADH + H(+) = a quinol + NAD(+). The enzyme catalyses a quinone + NADPH + H(+) = a quinol + NADP(+). The protein is NAD(P)H dehydrogenase (quinone) of Methanosarcina mazei (strain ATCC BAA-159 / DSM 3647 / Goe1 / Go1 / JCM 11833 / OCM 88) (Methanosarcina frisia).